The chain runs to 23 residues: Apolipophorin-3 (23 aa).

It belongs to the insect apolipophorin-3 family. As to quaternary structure, equilibrium between a soluble monomer and a bound lipoprotein form. Apolipophorin-3 associates with lipophorin during lipid loading until each particle contains 9 or 14 molecules of apolipophorin-3. In terms of tissue distribution, hemolymph.

It is found in the secreted. Assists in the loading of diacylglycerol, generated from triacylglycerol stores in the fat body through the action of adipokinetic hormone, into lipophorin, the hemolymph lipoprotein. It increases the lipid carrying capacity of lipophorin by covering the expanding hydrophobic surface resulting from diacylglycerol uptake. It thus plays a critical role in the transport of lipids during flight in several species of insects. This is Apolipophorin-3 from Melanoplus sanguinipes (Migratory grasshopper).